The chain runs to 283 residues: tRNA-cytidine(32) 2-sulfurtransferase (283 aa).

Positions 49-54 match the PP-loop motif motif; sequence SGGKDS. [4Fe-4S] cluster-binding residues include C124, C127, and C215.

This sequence belongs to the TtcA family. As to quaternary structure, homodimer. It depends on Mg(2+) as a cofactor. The cofactor is [4Fe-4S] cluster.

It is found in the cytoplasm. It catalyses the reaction cytidine(32) in tRNA + S-sulfanyl-L-cysteinyl-[cysteine desulfurase] + AH2 + ATP = 2-thiocytidine(32) in tRNA + L-cysteinyl-[cysteine desulfurase] + A + AMP + diphosphate + H(+). It participates in tRNA modification. In terms of biological role, catalyzes the ATP-dependent 2-thiolation of cytidine in position 32 of tRNA, to form 2-thiocytidine (s(2)C32). The sulfur atoms are provided by the cysteine/cysteine desulfurase (IscS) system. The polypeptide is tRNA-cytidine(32) 2-sulfurtransferase (Acaryochloris marina (strain MBIC 11017)).